Here is a 224-residue protein sequence, read N- to C-terminus: MYGTGNNAVTPDQAAASRADSLFAHAEGSISEDAILASARERSEEIGARAVTPAVGALLSLLTKLSGGKAVAEVGTGAGVSGLWLLSGMSYDGVLTTIDIEPEYLRLAKQAFSEAGIGPSRTRLISGRGQDVLTRLADESYDLVFIDADPIDQPAYVVEGVRLLRSCGIIVVHRAALGGRAGDPAARDAEVTAVREAARLIAENERLTPALVPLGDGLLAAVRE.

S-adenosyl-L-methionine is bound by residues V51, E73, 75-76 (GT), S81, D99, and I100. Position 147 (D147) interacts with substrate. D149 is a binding site for S-adenosyl-L-methionine.

Belongs to the class I-like SAM-binding methyltransferase superfamily. Cation-dependent O-methyltransferase family.

The protein is Putative O-methyltransferase MLBr01075 of Mycobacterium leprae (strain Br4923).